The chain runs to 379 residues: Presenilin-associated rhomboid-like protein, mitochondrial (379 aa).

The transit peptide at 1-52 (MAWRGWAQRGWGCGQAWAASVGGRSCEELTAALTPPRLLGRRFNFFIQQKCG) directs the protein to the mitochondrion. The Mitochondrial matrix segment spans residues 53–101 (FRKAPRKVEPRRSDTGTSGEAYKRSALIPPVEETVFYPSPYPIRSLIKP). Serine 65 carries the phosphoserine modification. Threonine 69 carries the phosphothreonine modification. A Phosphoserine modification is found at serine 70. Residues 102–121 (LFFTVGFTGCAFGSAAIWQY) traverse the membrane as a helical segment. Residues 122–167 (ESLKSRVQSYFDGIKADWLDSIRPQKEGDFRKEINKWWNNLSDGQR) are Mitochondrial intermembrane-facing. The chain crosses the membrane as a helical span at residues 168–187 (TVTGIIAANVLVFCLWRVPS). Topologically, residues 188-207 (LQRTMIRYFTSNPASKVLCS) are mitochondrial matrix. The chain crosses the membrane as a helical span at residues 208–230 (PMLLSTFSHFSLFHMAANMYVLW). Residues 231–244 (SFSSSIVNILGQEQ) lie on the Mitochondrial intermembrane side of the membrane. Residues 245–262 (FMAVYLSAGVISNFVSYV) form a helical membrane-spanning segment. At 263 to 273 (GKVATGRYGPS) the chain is on the mitochondrial matrix side. A helical membrane pass occupies residues 274–292 (LGASGAIMTVLAAVCTKIP). The active-site Nucleophile is the serine 277. The Mitochondrial intermembrane segment spans residues 293–295 (EGR). Residues 296–318 (LAIIFLPMFTFTAGNALKAIIAM) form a helical membrane-spanning segment. Residues 319–332 (DTAGMILGWKFFDH) are Mitochondrial matrix-facing. A helical membrane pass occupies residues 333 to 354 (AAHLGGALFGIWYVTYGHELIW). Histidine 335 is a catalytic residue. Over 355 to 379 (KNREPLVKIWHEIRTNGPKKGGGSK) the chain is Mitochondrial intermembrane.

This sequence belongs to the peptidase S54 family. As to quaternary structure, interacts with PSEN1 and PSEN2. Binds OPA1. In terms of processing, P-beta is proteolytically processed (beta-cleavage) in a PARL-dependent manner.

It is found in the mitochondrion inner membrane. The protein resides in the nucleus. It carries out the reaction Cleaves type-1 transmembrane domains using a catalytic dyad composed of serine and histidine that are contributed by different transmembrane domains.. Functionally, required for the control of apoptosis during postnatal growth. Essential for proteolytic processing of an antiapoptotic form of OPA1 which prevents the release of mitochondrial cytochrome c in response to intrinsic apoptotic signals. Required for the maturation of PINK1 into its 52kDa mature form after its cleavage by mitochondrial-processing peptidase (MPP). Promotes cleavage of serine/threonine-protein phosphatase PGAM5 in damaged mitochondria in response to loss of mitochondrial membrane potential. Mediates differential cleavage of PINK1 and PGAM5 depending on the health status of mitochondria, disassociating from PINK1 and associating with PGAM5 in response to mitochondrial membrane potential loss. Required for processing of CLPB into a form with higher protein disaggregase activity by removing an autoinhibitory N-terminal peptide. Promotes processing of DIABLO/SMAC in the mitochondrion which is required for DIABLO apoptotic activity. Also required for cleavage of STARD7 and TTC19. Promotes changes in mitochondria morphology regulated by phosphorylation of P-beta domain. This Pongo abelii (Sumatran orangutan) protein is Presenilin-associated rhomboid-like protein, mitochondrial (PARL).